Consider the following 261-residue polypeptide: Gap junction beta-6 protein (261 aa).

Residues 1-22 (MDWGTLHTVIGGVNKHSTSIGK) are Cytoplasmic-facing. The chain crosses the membrane as a helical span at residues 23 to 45 (VWITVIFIFRVMILVVAAQEVWG). Over 46-75 (DEQEDFVCNTLQPGCKNVCYDHFFPVSHIR) the chain is Extracellular. The chain crosses the membrane as a helical span at residues 76–98 (LWALQLIFVSTPALLVAMHVAYY). Residues 99 to 131 (RHETARKFIRGEKRNEFKDLEDIKRQKVRIEGS) lie on the Cytoplasmic side of the membrane. Residues 132–154 (LWWTYTSSIFFRIIFEAAFMYVF) traverse the membrane as a helical segment. The Extracellular portion of the chain corresponds to 155-192 (YFLYNGYHLPWVLKCGIDPCPNLVDCFISRPTEKTVFT). A helical transmembrane segment spans residues 193-215 (VFMISASVICMLLNVAELCYLLL). Residues 216-261 (KLCFRRSKRTQAQRNHPNHALKESKQNEMNELISDSGQNAITSFPS) lie on the Cytoplasmic side of the membrane.

It belongs to the connexin family. Beta-type (group I) subfamily. As to quaternary structure, a connexon is composed of a hexamer of connexins. Interacts with CNST. As to expression, highly expressed in adult brain and skin. Less in uterus, lung and eye. Very low in testis and sciatic nerve. No expression before birth.

It localises to the cell membrane. The protein localises to the cell junction. Its subcellular location is the gap junction. In terms of biological role, one gap junction consists of a cluster of closely packed pairs of transmembrane channels, the connexons, through which materials of low MW diffuse from one cell to a neighboring cell. This is Gap junction beta-6 protein (Gjb6) from Mus musculus (Mouse).